The sequence spans 239 residues: Adapter protein MecA (239 aa).

Basic and acidic residues predominate over residues Glu118–Gly128. The disordered stretch occupies residues Glu118–Arg137.

The protein belongs to the MecA family. Homodimer.

Enables the recognition and targeting of unfolded and aggregated proteins to the ClpC protease or to other proteins involved in proteolysis. In Staphylococcus aureus (strain JH1), this protein is Adapter protein MecA.